A 481-amino-acid polypeptide reads, in one-letter code: Glutamyl-tRNA(Gln) amidotransferase subunit A (481 aa).

Active-site charge relay system residues include Lys74 and Ser149. Ser173 acts as the Acyl-ester intermediate in catalysis.

It belongs to the amidase family. GatA subfamily. In terms of assembly, heterotrimer of A, B and C subunits.

The catalysed reaction is L-glutamyl-tRNA(Gln) + L-glutamine + ATP + H2O = L-glutaminyl-tRNA(Gln) + L-glutamate + ADP + phosphate + H(+). In terms of biological role, allows the formation of correctly charged Gln-tRNA(Gln) through the transamidation of misacylated Glu-tRNA(Gln) in organisms which lack glutaminyl-tRNA synthetase. The reaction takes place in the presence of glutamine and ATP through an activated gamma-phospho-Glu-tRNA(Gln). The protein is Glutamyl-tRNA(Gln) amidotransferase subunit A of Francisella tularensis subsp. tularensis (strain FSC 198).